Here is a 279-residue protein sequence, read N- to C-terminus: Pantothenate synthetase (279 aa).

26–33 (MGNLHEGH) provides a ligand contact to ATP. Catalysis depends on His-33, which acts as the Proton donor. A (R)-pantoate-binding site is contributed by Gln-57. Position 57 (Gln-57) interacts with beta-alanine. 144–147 (GKKD) lines the ATP pocket. Gln-150 serves as a coordination point for (R)-pantoate. ATP is bound by residues Val-173 and 181–184 (LSSR).

The protein belongs to the pantothenate synthetase family. Homodimer.

The protein resides in the cytoplasm. It catalyses the reaction (R)-pantoate + beta-alanine + ATP = (R)-pantothenate + AMP + diphosphate + H(+). It functions in the pathway cofactor biosynthesis; (R)-pantothenate biosynthesis; (R)-pantothenate from (R)-pantoate and beta-alanine: step 1/1. In terms of biological role, catalyzes the condensation of pantoate with beta-alanine in an ATP-dependent reaction via a pantoyl-adenylate intermediate. This Burkholderia cenocepacia (strain HI2424) protein is Pantothenate synthetase.